The chain runs to 160 residues: Putative 4-hydroxy-4-methyl-2-oxoglutarate aldolase (160 aa).

Substrate-binding positions include 76 to 79 and R98; that span reads GDMI. D99 contacts a divalent metal cation.

The protein belongs to the class II aldolase/RraA-like family. As to quaternary structure, homotrimer. The cofactor is a divalent metal cation.

It carries out the reaction 4-hydroxy-4-methyl-2-oxoglutarate = 2 pyruvate. It catalyses the reaction oxaloacetate + H(+) = pyruvate + CO2. In terms of biological role, catalyzes the aldol cleavage of 4-hydroxy-4-methyl-2-oxoglutarate (HMG) into 2 molecules of pyruvate. Also contains a secondary oxaloacetate (OAA) decarboxylase activity due to the common pyruvate enolate transition state formed following C-C bond cleavage in the retro-aldol and decarboxylation reactions. This is Putative 4-hydroxy-4-methyl-2-oxoglutarate aldolase from Alcanivorax borkumensis (strain ATCC 700651 / DSM 11573 / NCIMB 13689 / SK2).